A 195-amino-acid polypeptide reads, in one-letter code: DnaJ homolog subfamily C member 5 (195 aa).

A J domain is found at 13–82 (GDSLYIVLGL…RNIYDKYGSL (70 aa)). The disordered stretch occupies residues 162–195 (DMEKEGDGAIVVQPTSATETTQLTSDSHPSYHTE). Residues 174–189 (QPTSATETTQLTSDSH) are compositionally biased toward polar residues.

Post-translationally, palmitoylated. Palmitoylation occurs probably in the cysteine-rich domain and regulates DNAJC5 stable membrane attachment.

The protein localises to the cytoplasm. Its subcellular location is the cytosol. The protein resides in the membrane. It localises to the cytoplasmic vesicle. It is found in the secretory vesicle. The protein localises to the chromaffin granule membrane. Its subcellular location is the melanosome. The protein resides in the cell membrane. In terms of biological role, may have an important role in presynaptic function. May be involved in calcium-dependent neurotransmitter release at nerve endings. In Tetronarce californica (Pacific electric ray), this protein is DnaJ homolog subfamily C member 5.